We begin with the raw amino-acid sequence, 334 residues long: Ornithine carbamoyltransferase (334 aa).

Residues 57–60 (STRT), Gln84, Arg108, and 135–138 (HPTQ) contribute to the carbamoyl phosphate site. L-ornithine contacts are provided by residues Asn168, Asp233, and 237–238 (SM). Residues 275–276 (CL) and Arg320 each bind carbamoyl phosphate.

This sequence belongs to the aspartate/ornithine carbamoyltransferase superfamily. OTCase family.

It is found in the cytoplasm. It catalyses the reaction carbamoyl phosphate + L-ornithine = L-citrulline + phosphate + H(+). It participates in amino-acid biosynthesis; L-arginine biosynthesis; L-arginine from L-ornithine and carbamoyl phosphate: step 1/3. In terms of biological role, reversibly catalyzes the transfer of the carbamoyl group from carbamoyl phosphate (CP) to the N(epsilon) atom of ornithine (ORN) to produce L-citrulline. The protein is Ornithine carbamoyltransferase of Thermobifida fusca (strain YX).